The chain runs to 874 residues: Probable inorganic carbon transporter subunit DabA (874 aa).

Zn(2+) is bound by residues C398, D400, H580, and C595.

It belongs to the inorganic carbon transporter (TC 9.A.2) DabA family. In terms of assembly, forms a complex with DabB. The cofactor is Zn(2+).

The protein localises to the cell membrane. Part of an energy-coupled inorganic carbon pump. In Bacillus cereus (strain Q1), this protein is Probable inorganic carbon transporter subunit DabA.